The chain runs to 247 residues: 6-phosphogluconolactonase (247 aa).

The protein belongs to the glucosamine/galactosamine-6-phosphate isomerase family. 6-phosphogluconolactonase subfamily.

The catalysed reaction is 6-phospho-D-glucono-1,5-lactone + H2O = 6-phospho-D-gluconate + H(+). It participates in carbohydrate degradation; pentose phosphate pathway; D-ribulose 5-phosphate from D-glucose 6-phosphate (oxidative stage): step 2/3. Its function is as follows. Hydrolysis of 6-phosphogluconolactone to 6-phosphogluconate. This Mycobacterium bovis (strain ATCC BAA-935 / AF2122/97) protein is 6-phosphogluconolactonase (pgl).